The chain runs to 158 residues: Anaerobic ribonucleoside-triphosphate reductase-activating protein (158 aa).

The [4Fe-4S] cluster site is built by Cys26, Cys30, and Cys33. Residues 32–34 (GCY) and Gly74 each bind S-adenosyl-L-methionine.

Belongs to the organic radical-activating enzymes family. In terms of assembly, forms a tetramer composed of two NrdD and two NrdG subunits. Requires [4Fe-4S] cluster as cofactor.

It is found in the cytoplasm. It carries out the reaction glycyl-[protein] + reduced [flavodoxin] + S-adenosyl-L-methionine = glycin-2-yl radical-[protein] + semiquinone [flavodoxin] + 5'-deoxyadenosine + L-methionine + H(+). In terms of biological role, activation of anaerobic ribonucleoside-triphosphate reductase under anaerobic conditions by generation of an organic free radical, using S-adenosylmethionine and reduced flavodoxin as cosubstrates to produce 5'-deoxy-adenosine. This chain is Anaerobic ribonucleoside-triphosphate reductase-activating protein (nrdG), found in Pasteurella multocida (strain Pm70).